The following is a 341-amino-acid chain: 3-dehydroquinate synthase (341 aa).

NAD(+)-binding positions include 54-59 (DGEKYK), 88-92 (GVVTD), 112-113 (TT), Lys125, Lys133, and 151-154 (TLST). Zn(2+) contacts are provided by Glu166, His220, and His236.

It belongs to the sugar phosphate cyclases superfamily. Dehydroquinate synthase family. The cofactor is NAD(+). Requires Co(2+) as cofactor. Zn(2+) is required as a cofactor.

Its subcellular location is the cytoplasm. The enzyme catalyses 7-phospho-2-dehydro-3-deoxy-D-arabino-heptonate = 3-dehydroquinate + phosphate. The protein operates within metabolic intermediate biosynthesis; chorismate biosynthesis; chorismate from D-erythrose 4-phosphate and phosphoenolpyruvate: step 2/7. Catalyzes the conversion of 3-deoxy-D-arabino-heptulosonate 7-phosphate (DAHP) to dehydroquinate (DHQ). This Thermococcus kodakarensis (strain ATCC BAA-918 / JCM 12380 / KOD1) (Pyrococcus kodakaraensis (strain KOD1)) protein is 3-dehydroquinate synthase.